A 923-amino-acid chain; its full sequence is Transportin-3 (923 aa).

Methionine 1 carries the N-acetylmethionine modification. Serine 74 carries the phosphoserine modification. Phosphothreonine is present on threonine 896.

In terms of assembly, interacts with (GTP-bound) Ran. Interacts with (phosphorylated) SFRS1 and SFRS2; leading to their nuclear import. Interacts with NUP62. Interacts with RBM4. Interacts with CPSF6, promoting its nuclear import. As to quaternary structure, (Microbial infection) Interacts with the HIV-1 pre-integration complex (PIC), which is composed of viral genome, matrix protein, Vpr and integrase. Interacts with HIV-1 integrase protein; the interaction is direct. In terms of tissue distribution, expressed in skeletal muscle.

The protein resides in the nucleus envelope. It localises to the cytoplasm. Importin, which transports target proteins into the nucleus. Specifically mediates the nuclear import of splicing factor serine/arginine (SR) proteins, such as RBM4, SFRS1 and SFRS2, by recognizing phosphorylated SR domains. Also mediates the nuclear import of serine/arginine (SR) protein CPSF6, independently of CPSF6 phosphorylation. The nuclear import process is regulated by the small GTPase Ran that partitions between cytoplasm and nucleus in the predominantly GDP- and GTP-bound form, respectively. Importin associates with target cargo proteins in the cytoplasm, and the competitive binding of GTP-bound Ran induces the release of cargos in the nucleus. Functionally, (Microbial infection) Involved in immunodeficiency virus (HIV-1) infection by importing the pre-integration complex (PIC) into the nucleus. Required for a nuclear maturation step of HIV-1 prior to integration. This chain is Transportin-3, found in Homo sapiens (Human).